The sequence spans 111 residues: UPF0339 protein in ptx operon 5'region (111 aa).

Tandem repeats lie at residues 10–58 (DKAG…RYER) and 61–109 (SGAD…VVEV).

It belongs to the UPF0339 family. Duplicated subfamily.

The protein is UPF0339 protein in ptx operon 5'region of Stutzerimonas stutzeri (Pseudomonas stutzeri).